A 2457-amino-acid chain; its full sequence is Highly reducing polyketide synthase ACTTS3 (2457 aa).

Residues 5–435 (REPIAVIGSA…GTNAHVILES (431 aa)) enclose the Ketosynthase family 3 (KS3) domain. Catalysis depends on for beta-ketoacyl synthase activity residues Cys-179, His-316, and His-356. Residues 545–856 (RVLGIFTGQG…VMEAVLESSP (312 aa)) are malonyl-CoA:ACP transacylase (MAT) domain. Ser-641 functions as the For malonyltransferase activity in the catalytic mechanism. The tract at residues 938 to 1078 (HELLGRRTAD…GRIIIHLGSG (141 aa)) is N-terminal hotdog fold. The interval 938–1244 (HELLGRRTAD…LSLKSVAEPT (307 aa)) is dehydratase (DH) domain. The region spanning 938 to 1246 (HELLGRRTAD…LKSVAEPTEE (309 aa)) is the PKS/mFAS DH domain. Catalysis depends on His-970, which acts as the Proton acceptor; for dehydratase activity. The segment at 1091–1246 (TDLSPVDLDR…LKSVAEPTEE (156 aa)) is C-terminal hotdog fold. Asp-1152 (proton donor; for dehydratase activity) is an active-site residue. Positions 1399–1587 (ETMNNCIARA…DVFYDFPDRS (189 aa)) are methyltransferase (CMet) domain. The interval 2085-2281 (FLPDKTYLMI…SDRHIENHLR (197 aa)) is ketoreductase (KR) domain. A Carrier domain is found at 2374-2451 (DVTTVFQQAF…EISIDATKKY (78 aa)). Ser-2411 is subject to O-(pantetheine 4'-phosphoryl)serine.

It depends on pantetheine 4'-phosphate as a cofactor.

Its pathway is mycotoxin biosynthesis. Its function is as follows. Highly reducing polyketide synthase; part of the gene clusters that mediate the biosynthesis of the host-selective toxins (HSTs) ACT-toxins responsible for brown spot of tangerine disease by the tangerine pathotype which affects tangerines and mandarins. ACT-toxins consist of three moieties, 9,10-epoxy-8-hydroxy-9-methyl-decatrienoic acid (EDA), valine and a polyketide. ACT-toxin I is toxic to both citrus and pear; toxin II the 5''-deoxy derivative of ACT-toxin I, is highly toxic to pear and slightly toxic to citrus. On cellular level, ACT-toxins affect plasma membrane of susceptible cells and cause a sudden increase in loss of K(+) after a few minutes of toxin treatment. The acyl-CoA ligase ACTT1, the hydrolase ACTT2, the enoyl-CoA hydratases ACTT3 and ACTT6, and the acyl-CoA synthetase ACTT5 are all involved in the biosynthesis of the AK-, AF- and ACT-toxin common 9,10-epoxy-8-hydroxy-9-methyl-decatrienoic acid (EDA) structural moiety. The exact role of each enzyme, and of additional enzymes identified within the AF-toxin clusters have still to be determined. On the other hand, ACTTS1 to ACTTS4 are specific to the tangerine pathotype. The function of ACTTS3 is to elongate the polyketide chain portion of ACT-toxin that is unique to this toxin. The enoyl-reductase ACTTS2 might complement the missing enoyl-reductase (ER) domain in ACTTS3 in the synthesis of the polyketide portion of ACT-toxin. The roles of the nonribosomal peptide synthetases-related proteins ACTTS1 and ACTTS4 have also still not been elucidated. In Alternaria alternata (Alternaria rot fungus), this protein is Highly reducing polyketide synthase ACTTS3.